The following is a 402-amino-acid chain: Zinc finger protein 322 (402 aa).

The C2H2-type 1; atypical zinc-finger motif lies at 43–65; the sequence is YQCLECKQNFCENLALIMCERTH. C2H2-type zinc fingers lie at residues 71-93, 99-121, 127-149, 155-177, 183-205, 211-233, 239-261, and 267-289; these read YKCD…QRIH, YKCS…QRTH, YTCD…QRSH, YLCS…RRTH, FKCL…QRTH, YKCN…KRVH, YKCG…QRVH, and YKCL…QATH. The C2H2-type 10; degenerate zinc-finger motif lies at 293–315; it reads FKCLEYEKSFNCSSDLIVHQRIH. Residues 351–373 form a C2H2-type 11; degenerate zinc finger; it reads YKYTVCDKSFHQSSALLQHQTVH. Residue serine 391 is modified to Phosphoserine.

It belongs to the krueppel C2H2-type zinc-finger protein family. As to quaternary structure, interacts with POU5F1. As to expression, ubiquitous. Highly expressed in heart and skeletal muscle.

The protein localises to the cytoplasm. It localises to the nucleus. Functionally, transcriptional activator. Important for maintenance of pluripotency in embryonic stem cells. Binds directly to the POU5F1 distal enhancer and the NANOG proximal promoter, and enhances expression of both genes. Can also bind to numerous other gene promoters and regulates expression of many other pluripotency factors, either directly or indirectly. Promotes inhibition of MAPK signaling during embryonic stem cell differentiation. This chain is Zinc finger protein 322 (ZNF322), found in Homo sapiens (Human).